The sequence spans 323 residues: MDIPFEEGVLSPSAADMRPEPPNSLDLNDTHPRRIKLTAPNINLSLDQSEGSILSDDNLDSPDEIDINVDELDTPDEADSFEYAGHEDPTANKDSGQESESIPEYTAEEEREDNRLWRTVVIGEQEQRIDMKVIEPYRRVISHGGYYGDGLNAIIVFAACFLPDSSRADYHYVMENLFLYVISTLELMVAEDYMIVYLNGATPRRRMPGLGWMKKCYQMIDRRLRKNLKSFIIVHPSWFIRTILAATRPFISSKFSSKIKYVNSLSELSGLIPMDCIHIPESIIKLDEELREASEAAKTSCLYNDPEMSSMEKDIDLKLKEKP.

Disordered regions lie at residues 1 to 67 (MDIP…EIDI) and 79 to 110 (DSFE…AEEE). Over residues 40–52 (PNINLSLDQSEGS) the composition is skewed to polar residues. Over residues 57-67 (DNLDSPDEIDI) the composition is skewed to acidic residues. Residues 130-291 (DMKVIEPYRR…SIIKLDEELR (162 aa)) enclose the CRAL-TRIO domain.

The protein resides in the cytoplasm. Its function is as follows. May play an important role in regulating differentiation, survival and aggressiveness of the tumor cells. The sequence is that of Protein prune homolog 2 (PRUNE2) from Pongo abelii (Sumatran orangutan).